The following is a 556-amino-acid chain: MAVEVVQETLQQAASSSSTTVLGFSPMLTTLVGTLVAMALYEYWRRNSREYRMVANIPSPPELPILGQAHVAAGLSNAEILAVGLGYLNKYGETMKAWLGNVLLVFLTNPSDIELILSGHQHLTKAEEYRYFKPWFGDGLLISNGHHWRHHRKMIAPTFHQSILKSFVPTFVDHSKAVVARMGLEAGKSFDVHDYMSQTTVDILLSTAMGVKKLPEGNKSFEYAQAVVDMCDIIHKRQVKLLYRLDSIYKFTKLREKGDRMMNIILGMTSKVVKDRKENFQEESRAIVEEISTPVASTPASKKEGLRDDLDDIDENDVGAKRRLALLDAMVEMAKNPDIEWNEKDIMDEVNTIMFEGHDTTSAGSSFALCMMGIHKDIQAKVFAEQKAIFGDNMLRDCTFADTMEMKYLERVILETLRLYPPVPLIARRLDYDLKLASGPYTVPKGTTVIVLQYCVHRRPDIYPNPTKFDPDNFLPERMANRHYYSFIPFSAGPRSCVGRKYAMLKLKVLLSTIVRNYIVHSTDTEADFKLQADIILKLENGFNVSLEKRQYATVA.

Positions 356 and 497 each coordinate heme.

Belongs to the cytochrome P450 family. The cofactor is heme.

Its subcellular location is the endoplasmic reticulum membrane. It is found in the microsome membrane. Functionally, may be involved in the metabolism of insect hormones and in the breakdown of synthetic insecticides. This Drosophila melanogaster (Fruit fly) protein is Cytochrome P450 4g1 (Cyp4g1).